The chain runs to 658 residues: Protein translocase subunit SecA 3 (658 aa).

ATP contacts are provided by residues Gln-111, 129–133 (GEGKT), and Asp-536.

The protein belongs to the SecA family. As to quaternary structure, monomer and homodimer. Part of the essential Sec protein translocation apparatus which comprises SecA, SecYEG and auxiliary proteins SecDF-YajC and YidC.

The protein resides in the cell inner membrane. It localises to the cytoplasm. The enzyme catalyses ATP + H2O + cellular proteinSide 1 = ADP + phosphate + cellular proteinSide 2.. Part of the Sec protein translocase complex. Interacts with the SecYEG preprotein conducting channel. Has a central role in coupling the hydrolysis of ATP to the transfer of proteins into and across the cell membrane, serving both as a receptor for the preprotein-SecB complex and as an ATP-driven molecular motor driving the stepwise translocation of polypeptide chains across the membrane. In Magnetococcus marinus (strain ATCC BAA-1437 / JCM 17883 / MC-1), this protein is Protein translocase subunit SecA 3.